The sequence spans 995 residues: DNA polymerase (995 aa).

The protein belongs to the DNA polymerase type-B family.

It catalyses the reaction DNA(n) + a 2'-deoxyribonucleoside 5'-triphosphate = DNA(n+1) + diphosphate. In Kluyveromyces lactis (strain ATCC 8585 / CBS 2359 / DSM 70799 / NBRC 1267 / NRRL Y-1140 / WM37) (Yeast), this protein is DNA polymerase (RF1).